Here is a 300-residue protein sequence, read N- to C-terminus: Ubiquinone biosynthesis protein COQ4, mitochondrial (300 aa).

His-173, Asp-174, His-177, and Glu-189 together coordinate Zn(2+).

Belongs to the COQ4 family. In terms of assembly, component of a multi-subunit COQ enzyme complex, composed of at least COQ3, COQ4, COQ5, COQ6, COQ7 and COQ9. Requires Zn(2+) as cofactor.

It is found in the mitochondrion inner membrane. The enzyme catalyses a 4-hydroxy-3-methoxy-5-(all-trans-polyprenyl)benzoate + H(+) = a 2-methoxy-6-(all-trans-polyprenyl)phenol + CO2. Its pathway is cofactor biosynthesis; ubiquinone biosynthesis. In terms of biological role, lyase that catalyzes the C1-decarboxylation of 4-hydroxy-3-methoxy-5-(all-trans-polyprenyl)benzoic acid into 2-methoxy-6-(all-trans-polyprenyl)phenol during ubiquinone biosynthesis. The protein is Ubiquinone biosynthesis protein COQ4, mitochondrial of Cryptococcus neoformans var. neoformans serotype D (strain B-3501A) (Filobasidiella neoformans).